Consider the following 1032-residue polypeptide: Protein translocase subunit SecA (1032 aa).

ATP contacts are provided by residues Gln121, 139 to 143, and Asp570; that span reads GEGKT. The disordered stretch occupies residues 945 to 975; sequence TAGGSENATEDAPKPAKRGVGGAARRVSNAA. Residues Cys994, Cys996, Cys1005, and His1006 each contribute to the Zn(2+) site.

It belongs to the SecA family. Monomer and homodimer. Part of the essential Sec protein translocation apparatus which comprises SecA, SecYEG and auxiliary proteins SecDF. Other proteins may also be involved. Zn(2+) serves as cofactor.

Its subcellular location is the cell membrane. It localises to the cytoplasm. The enzyme catalyses ATP + H2O + cellular proteinSide 1 = ADP + phosphate + cellular proteinSide 2.. Its function is as follows. Part of the Sec protein translocase complex. Interacts with the SecYEG preprotein conducting channel. Has a central role in coupling the hydrolysis of ATP to the transfer of proteins into and across the cell membrane, serving as an ATP-driven molecular motor driving the stepwise translocation of polypeptide chains across the membrane. This Herpetosiphon aurantiacus (strain ATCC 23779 / DSM 785 / 114-95) protein is Protein translocase subunit SecA.